We begin with the raw amino-acid sequence, 234 residues long: Small ribosomal subunit protein uS3 (234 aa).

Positions 39–108 (IRKFVKKKLF…TVIVNVVEVK (70 aa)) constitute a KH type-2 domain. The disordered stretch occupies residues 212–234 (KGKNEETNNETADNSRGRRREAK).

It belongs to the universal ribosomal protein uS3 family. In terms of assembly, part of the 30S ribosomal subunit. Forms a tight complex with proteins S10 and S14.

In terms of biological role, binds the lower part of the 30S subunit head. Binds mRNA in the 70S ribosome, positioning it for translation. The protein is Small ribosomal subunit protein uS3 of Alkaliphilus metalliredigens (strain QYMF).